The following is a 312-amino-acid chain: uncharacterized protein (312 aa).

Belongs to the mimivirus R69 family.

This is an uncharacterized protein from Acanthamoeba polyphaga mimivirus (APMV).